The following is a 175-amino-acid chain: Apoptosis regulator Bcl-2 homolog (175 aa).

The short motif at 75–94 (QVLEDKINWGRIITIIAFCA) is the BH1 element. The short motif at 105–120 (SPQYYDGIISEAITDA) is the BH2 element.

The protein belongs to the Bcl-2 family. As to quaternary structure, interacts with host BAX; this interaction inhibits BAX oligomerization and subsequent activation. Interacts with host BAK1.

The protein localises to the host mitochondrion. Plays a role in the inhibition of host apoptosis by sequestering and inactivating multiple proapoptotic BCL-2 proteins, including BAK1 and BAX. This Vertebrata (FPV) protein is Apoptosis regulator Bcl-2 homolog.